Here is a 79-residue protein sequence, read N- to C-terminus: Cyclin-dependent kinases regulatory subunit 1 (79 aa).

S2 is modified (N-acetylserine).

This sequence belongs to the CKS family. As to quaternary structure, forms a homohexamer that can probably bind six kinase subunits.

In terms of biological role, binds to the catalytic subunit of the cyclin dependent kinases and is essential for their biological function. The polypeptide is Cyclin-dependent kinases regulatory subunit 1 (CKS1B) (Bos taurus (Bovine)).